A 263-amino-acid polypeptide reads, in one-letter code: tRNA pseudouridine synthase A (263 aa).

D53 functions as the Nucleophile in the catalytic mechanism. Y111 is a substrate binding site. The disordered stretch occupies residues 232–263 (TAPGHGLISGRSNMTNGKLENNKTTNPCVTKY). Residues 241–263 (GRSNMTNGKLENNKTTNPCVTKY) are compositionally biased toward polar residues.

The protein belongs to the tRNA pseudouridine synthase TruA family. In terms of assembly, homodimer.

The catalysed reaction is uridine(38/39/40) in tRNA = pseudouridine(38/39/40) in tRNA. Its function is as follows. Formation of pseudouridine at positions 38, 39 and 40 in the anticodon stem and loop of transfer RNAs. The chain is tRNA pseudouridine synthase A from Halalkalibacterium halodurans (strain ATCC BAA-125 / DSM 18197 / FERM 7344 / JCM 9153 / C-125) (Bacillus halodurans).